The sequence spans 292 residues: Thyroxine 5-deiodinase (292 aa).

Over 1–30 (VVGEGRGALGGAATMLRSLLLHSLRLCAQT) the chain is Cytoplasmic. A helical; Signal-anchor for type II membrane protein transmembrane segment spans residues 31 to 50 (ASCLVLFPRFLGTAFMLWLL). At 51–292 (DFLCIRKHLL…QLHGPQPRRV (242 aa)) the chain is on the extracellular side. Sec-158 is an active-site residue. Sec-158 is a non-standard amino acid (selenocysteine).

Belongs to the iodothyronine deiodinase family. Monomer. Homodimer. May undergo minor heretodimerization with DIO1 and DIO2.

It is found in the cell membrane. The protein localises to the endosome membrane. It carries out the reaction 3,3',5'-triiodo-L-thyronine + iodide + A + H(+) = L-thyroxine + AH2. It catalyses the reaction 3,3'-diiodo-L-thyronine + iodide + A + H(+) = 3,3',5-triiodo-L-thyronine + AH2. The enzyme catalyses 3-iodo-L-thyronine + iodide + A + H(+) = 3,5-diiodo-L-thyronine + AH2. The catalysed reaction is L-thyronine + iodide + A + H(+) = 3-iodo-L-thyronine + AH2. It carries out the reaction 3',5'-diiodo-L-thyronine + iodide + A + H(+) = 3,3',5'-triiodo-L-thyronine + AH2. It catalyses the reaction 3'-iodo-L-thyronine + iodide + A + H(+) = 3,3'-diiodo-L-thyronine + AH2. The enzyme catalyses 3,3',5'-triiodothyronamine + iodide + A + H(+) = 3,3',5,5'-tetraiodothyronamine + AH2. The catalysed reaction is 3',5'-diiodothyronamine + iodide + A + H(+) = 3,3',5'-triiodothyronamine + AH2. It carries out the reaction 3,3'-diiodothyronamine + iodide + A + H(+) = 3,3',5-triiodothyronamine + AH2. It catalyses the reaction 3-iodothyronamine + iodide + A + H(+) = 3,5-diiodothyronamine + AH2. The enzyme catalyses 3'-iodothyronamine + iodide + A + H(+) = 3,3'-diiodothyronamine + AH2. The catalysed reaction is thyronamine + iodide + A + H(+) = 3-iodothyronamine + AH2. Plays a crucial role in the metabolism of thyroid hormones (TH) and has specific roles in TH activation and inactivation by deiodination.Catalyzes the deiodination of L-thyroxine (T4) to 3,3',5'-triiodothyronine (rT3), 3,5,3'-triiodothyronine (T3) to 3,3'-diiodothyronine (3,3'-T2), 3,5-diiodothyronine (3,5-T2) to 3-monoiodothyronine (3-T1), rT3 to 3',5'-diiodothyronine (3',5'-T2) and 3,3'-T2 to 3'-monoiodothyronine (3'-T1) via inner-ring deiodination (IRD). Catalyzes the deiodination of 3-T1 to L-thyronine (T0) via outer-ring deiodination (ORD). Catalyzes the tyrosyl ring deiodinations of 3,3',5,5'-tetraiodothyronamine, 3,3',5'-triiodothyronamine, 3,5,3'-triiodothyronamine, 3,5-diiodothyronamine, 3,3'-diiodothyronamine and 3-iodothyronamine. The polypeptide is Thyroxine 5-deiodinase (DIO3) (Ovis aries (Sheep)).